A 183-amino-acid chain; its full sequence is MIVIVGPSGAGKDTLMDYAAAQLSGRPGFHFTRRVITRSCDAGGENHDAVSMHEFNQLEDAGAFAVSWQAHGLKYGIPAAVYRHLEAGDVVIANGSRSALPHFGTAFSRLKVVNIVARPDVLARRLEQRGRESRDDILRRLERSSLAVAGDFDVTTVDNSGAIEDAGKTIMQVLQQSAGSSQP.

6–13 serves as a coordination point for ATP; it reads GPSGAGKD.

It belongs to the ribose 1,5-bisphosphokinase family.

The enzyme catalyses alpha-D-ribose 1,5-bisphosphate + ATP = 5-phospho-alpha-D-ribose 1-diphosphate + ADP. It functions in the pathway metabolic intermediate biosynthesis; 5-phospho-alpha-D-ribose 1-diphosphate biosynthesis; 5-phospho-alpha-D-ribose 1-diphosphate from D-ribose 5-phosphate (route II): step 3/3. Its function is as follows. Catalyzes the phosphorylation of ribose 1,5-bisphosphate to 5-phospho-D-ribosyl alpha-1-diphosphate (PRPP). This is Ribose 1,5-bisphosphate phosphokinase PhnN from Agrobacterium fabrum (strain C58 / ATCC 33970) (Agrobacterium tumefaciens (strain C58)).